The sequence spans 294 residues: 33 kDa chaperonin (294 aa).

2 disulfide bridges follow: Cys-239/Cys-241 and Cys-272/Cys-275.

This sequence belongs to the HSP33 family. In terms of processing, under oxidizing conditions two disulfide bonds are formed involving the reactive cysteines. Under reducing conditions zinc is bound to the reactive cysteines and the protein is inactive.

The protein localises to the cytoplasm. Its function is as follows. Redox regulated molecular chaperone. Protects both thermally unfolding and oxidatively damaged proteins from irreversible aggregation. Plays an important role in the bacterial defense system toward oxidative stress. This is 33 kDa chaperonin from Lacticaseibacillus paracasei (strain ATCC 334 / BCRC 17002 / CCUG 31169 / CIP 107868 / KCTC 3260 / NRRL B-441) (Lactobacillus paracasei).